Consider the following 380-residue polypeptide: Cytochrome b (380 aa).

4 helical membrane-spanning segments follow: residues 33-53, 77-98, 113-133, and 178-198; these read FGSL…FLAM, WFIR…YLHI, WTIG…GYVL, and FFTF…VHLL. Positions 83 and 97 each coordinate heme b. The heme b site is built by histidine 182 and histidine 196. Residue histidine 201 participates in a ubiquinone binding. A run of 4 helical transmembrane segments spans residues 226 to 246, 288 to 308, 320 to 340, and 347 to 367; these read YKDL…ALFS, LGGV…PILH, LTQT…WIGG, and FVII…VLAP.

Belongs to the cytochrome b family. In terms of assembly, the cytochrome bc1 complex contains 3 respiratory subunits (MT-CYB, CYC1 and UQCRFS1), 2 core proteins (UQCRC1 and UQCRC2) and probably 6 low-molecular weight proteins. Heme b is required as a cofactor.

The protein localises to the mitochondrion inner membrane. Component of the ubiquinol-cytochrome c reductase complex (complex III or cytochrome b-c1 complex) that is part of the mitochondrial respiratory chain. The b-c1 complex mediates electron transfer from ubiquinol to cytochrome c. Contributes to the generation of a proton gradient across the mitochondrial membrane that is then used for ATP synthesis. This Lampris guttatus (Opah) protein is Cytochrome b (mt-cyb).